A 234-amino-acid polypeptide reads, in one-letter code: Probable cyclic nucleotide phosphodiesterase Rmag_0669 (234 aa).

Fe cation-binding residues include Asp-11, His-13, Asp-49, Asn-79, His-145, His-184, and His-186. Residues His-13, Asp-49, and 79 to 80 (NH) contribute to the AMP site. Residue His-186 coordinates AMP.

It belongs to the cyclic nucleotide phosphodiesterase class-III family. Requires Fe(2+) as cofactor.

This Ruthia magnifica subsp. Calyptogena magnifica protein is Probable cyclic nucleotide phosphodiesterase Rmag_0669.